We begin with the raw amino-acid sequence, 114 residues long: Gas vesicle protein J (114 aa).

The disordered stretch occupies residues 63-114 (PTGTDMERVEEAAGISPDESRSLDTRSESEQMDELPGEAGASVSNTAPQEEE). Basic and acidic residues predominate over residues 80 to 91 (DESRSLDTRSES). Positions 104–114 (SVSNTAPQEEE) are enriched in polar residues.

This sequence belongs to the gas vesicle GvpA family. In terms of assembly, gvpF to GvpM interact with each other in vitro, and may form multi-subunit complex(es). Interacts with GvpA.

The protein localises to the gas vesicle. A minor component of the gas vesicle, proteins GvpF to GvpM might be involved in nucleating gas vesicle formation. Gas vesicles are hollow, gas filled proteinaceous nanostructures found in some microorganisms. They allow positioning of halobacteria at the optimal depth for growth in the poorly aerated, shallow brine pools of their habitat. Functionally, expression of a 9.5 kb mc-vac DNA fragment containing 2 divergently transcribed regions (gvpD-gvpE-gvpF-gvpG-gvpH-gvpI-gvpJ-gvpK-gvpL-gvpM and gvpA-gvpC-gvpN-gvpO) allows H.volcanii to produce gas vesicles. The sequence is that of Gas vesicle protein J from Haloferax mediterranei (strain ATCC 33500 / DSM 1411 / JCM 8866 / NBRC 14739 / NCIMB 2177 / R-4) (Halobacterium mediterranei).